The chain runs to 352 residues: Protein RecA (352 aa).

Position 68-75 (68-75) interacts with ATP; it reads GPESSGKT.

This sequence belongs to the RecA family.

It is found in the cytoplasm. Functionally, can catalyze the hydrolysis of ATP in the presence of single-stranded DNA, the ATP-dependent uptake of single-stranded DNA by duplex DNA, and the ATP-dependent hybridization of homologous single-stranded DNAs. It interacts with LexA causing its activation and leading to its autocatalytic cleavage. This Clostridium perfringens (strain ATCC 13124 / DSM 756 / JCM 1290 / NCIMB 6125 / NCTC 8237 / Type A) protein is Protein RecA.